Here is a 393-residue protein sequence, read N- to C-terminus: S-adenosylmethionine synthase 2 (393 aa).

Glutamate 9 provides a ligand contact to Mg(2+). Residue histidine 15 coordinates ATP. Glutamate 43 contacts K(+). The L-methionine site is built by glutamate 56 and glutamine 99. ATP contacts are provided by residues 167–169 (DGK), 235–238 (SGRF), aspartate 246, 252–253 (RK), alanine 269, lysine 273, and lysine 277. Aspartate 246 is an L-methionine binding site. Lysine 277 is a binding site for L-methionine.

This sequence belongs to the AdoMet synthase family. As to quaternary structure, homotetramer. The cofactor is Mn(2+). Requires Mg(2+) as cofactor. It depends on Co(2+) as a cofactor. K(+) serves as cofactor.

The protein localises to the cytoplasm. It catalyses the reaction L-methionine + ATP + H2O = S-adenosyl-L-methionine + phosphate + diphosphate. It functions in the pathway amino-acid biosynthesis; S-adenosyl-L-methionine biosynthesis; S-adenosyl-L-methionine from L-methionine: step 1/1. In terms of biological role, catalyzes the formation of S-adenosylmethionine from methionine and ATP. The reaction comprises two steps that are both catalyzed by the same enzyme: formation of S-adenosylmethionine (AdoMet) and triphosphate, and subsequent hydrolysis of the triphosphate. The chain is S-adenosylmethionine synthase 2 (METK2) from Populus trichocarpa (Western balsam poplar).